A 203-amino-acid chain; its full sequence is Small ribosomal subunit protein uS5 (203 aa).

Residues 1–25 (MPGRTRRDGGSESGGKDRRDRRDGG) show a composition bias toward basic and acidic residues. Residues 1–36 (MPGRTRRDGGSESGGKDRRDRRDGGRGGAAQEKTPQ) are disordered. Positions 36 to 99 (QFERVVTINR…EEAKKNFFRV (64 aa)) constitute an S5 DRBM domain.

Belongs to the universal ribosomal protein uS5 family. Part of the 30S ribosomal subunit. Contacts proteins S4 and S8.

Its function is as follows. With S4 and S12 plays an important role in translational accuracy. In terms of biological role, located at the back of the 30S subunit body where it stabilizes the conformation of the head with respect to the body. This chain is Small ribosomal subunit protein uS5, found in Saccharopolyspora erythraea (strain ATCC 11635 / DSM 40517 / JCM 4748 / NBRC 13426 / NCIMB 8594 / NRRL 2338).